Consider the following 462-residue polypeptide: MGPWTHSLRAVLLLVLLGVCTVRSDTPANCTYPDLLGTWVFQVGPRSSRSDINCSVMEATEEKVVVHLKKLDTAYDELGNSGHFTLIYNQGFEIVLNDYKWFAFFKYEVRGHTAISYCHETMTGWVHDVLGRNWACFVGKKVESHIEKVNMNAAHLGGLQERYSERLYTHNHNFVKAINTVQKSWTATAYKEYEKMSLRDLIRRSGHSQRIPRPKPAPMTDEIQQQILNLPESWDWRNVQGVNYVSPVRNQESCGSCYSFASMGMLEARIRILTNNSQTPILSPQEVVSCSPYAQGCDGGFPYLIAGKYAQDFGVVEESCFPYTAKDSPCKPRENCLRYYSSDYYYVGGFYGGCNEALMKLELVKHGPMAVAFEVHDDFLHYHSGIYHHTGLSDPFNPFELTNHAVLLVGYGRDPVTGIEYWIIKNSWGSNWGESGYFRIRRGTDECAIESIAVAAIPIPKL.

An N-terminal signal peptide occupies residues 1–24 (MGPWTHSLRAVLLLVLLGVCTVRS). N-linked (GlcNAc...) asparagine glycans are attached at residues Asn-29 and Asn-53. 5 disulfide bridges follow: Cys-30/Cys-118, Cys-54/Cys-136, Cys-254/Cys-297, Cys-290/Cys-330, and Cys-320/Cys-336. Positions 135–230 (ACFVGKKVES…DEIQQQILNL (96 aa)) are excised as a propeptide. Cys-257 is a catalytic residue. Residue Asn-275 is glycosylated (N-linked (GlcNAc...) asparagine). Residues Phe-301 and Tyr-303 each coordinate chloride. Tyr-346 serves as a coordination point for chloride. Residues His-404 and Asn-426 contribute to the active site.

Belongs to the peptidase C1 family. As to quaternary structure, tetramer of heterotrimers consisting of exclusion domain, heavy- and light chains. Requires chloride as cofactor. As to expression, broadly distributed, but higher levels found in lung, liver, kidney and spleen. Lower levels found in testis and brain.

The protein localises to the lysosome. It catalyses the reaction Release of an N-terminal dipeptide, Xaa-Yaa-|-Zaa-, except when Xaa is Arg or Lys, or Yaa or Zaa is Pro.. Functionally, thiol protease. Has dipeptidylpeptidase activity. Active against a broad range of dipeptide substrates composed of both polar and hydrophobic amino acids. Proline cannot occupy the P1 position and arginine cannot occupy the P2 position of the substrate. Can act as both an exopeptidase and endopeptidase. Activates serine proteases such as elastase, cathepsin G and granzymes A and B. The sequence is that of Dipeptidyl peptidase 1 (Ctsc) from Mus musculus (Mouse).